We begin with the raw amino-acid sequence, 152 residues long: MFRGATLVNLDSKGRITVPSRYRTTLNEASEGQMVCTIDLNQPCLLLYTLPEWEKIELKLAALSSMNPAERRVQRLLLGHASECQMDSAGRLLLASTLRQHAGLTKEVMLVGQFNKFELWDEQVWYQQIKEDILAEQTSQEPLSTRLLDLSL.

2 consecutive SpoVT-AbrB domains span residues 5 to 52 and 81 to 124; these read ATLV…TLPE and ASEC…DEQV.

Belongs to the MraZ family. As to quaternary structure, forms oligomers.

Its subcellular location is the cytoplasm. It is found in the nucleoid. Its function is as follows. Negatively regulates its own expression and that of the subsequent genes in the proximal part of the division and cell wall (dcw) gene cluster. Acts by binding directly to DNA. May also regulate the expression of genes outside the dcw cluster. The sequence is that of Transcriptional regulator MraZ from Proteus mirabilis (strain HI4320).